Consider the following 373-residue polypeptide: Cystathionine gamma-synthase/O-acetylhomoserine (thiol)-lyase (373 aa).

K197 carries the N6-(pyridoxal phosphate)lysine modification.

The protein belongs to the trans-sulfuration enzymes family. As to quaternary structure, homotetramer. Pyridoxal 5'-phosphate serves as cofactor.

Its subcellular location is the cytoplasm. The catalysed reaction is O-acetyl-L-homoserine + L-cysteine = L,L-cystathionine + acetate + H(+). It carries out the reaction O-acetyl-L-homoserine + hydrogen sulfide = L-homocysteine + acetate. Its pathway is amino-acid biosynthesis; L-methionine biosynthesis via de novo pathway. Catalyzes the formation of L-cystathionine from O-acetyl-L-homoserine and L-cysteine. Cannot use O-succinyl-L-homoserine as substrate. Also exhibits O-acetylhomoserine thiolyase activity, catalyzing the synthesis of L-homocysteine from O-acetyl-L-homoserine and sulfide. The protein is Cystathionine gamma-synthase/O-acetylhomoserine (thiol)-lyase (metI) of Bacillus subtilis (strain 168).